The sequence spans 491 residues: 3-octaprenyl-4-hydroxybenzoate carboxy-lyase (491 aa).

Residue Asn172 coordinates Mn(2+). Prenylated FMN-binding positions include 175–177, 189–191, and 194–195; these read IYR, RWL, and RG. Glu238 provides a ligand contact to Mn(2+). Catalysis depends on Asp287, which acts as the Proton donor.

It belongs to the UbiD family. In terms of assembly, homohexamer. Requires prenylated FMN as cofactor. The cofactor is Mn(2+).

It is found in the cell membrane. The catalysed reaction is a 4-hydroxy-3-(all-trans-polyprenyl)benzoate + H(+) = a 2-(all-trans-polyprenyl)phenol + CO2. It participates in cofactor biosynthesis; ubiquinone biosynthesis. In terms of biological role, catalyzes the decarboxylation of 3-octaprenyl-4-hydroxy benzoate to 2-octaprenylphenol, an intermediate step in ubiquinone biosynthesis. This chain is 3-octaprenyl-4-hydroxybenzoate carboxy-lyase, found in Histophilus somni (strain 2336) (Haemophilus somnus).